Consider the following 496-residue polypeptide: Pyrrole-2-carboxylic acid decarboxylase (496 aa).

Trp166 contacts K(+). Prenylated FMN contacts are provided by Val168, Arg170, Gln187, and His188. His188 contacts Mn(2+). K(+) is bound by residues Ala218, Ala219, Met221, and Glu229. Glu229 lines the prenylated FMN pocket. Glu229 contributes to the Mn(2+) binding site. Glu278 (proton donor) is an active-site residue. His386 is a binding site for prenylated FMN.

This sequence belongs to the UbiD family. UbiD-like/FDC subfamily. As to quaternary structure, homodimer. Prenylated FMN serves as cofactor. Mn(2+) is required as a cofactor. Requires K(+) as cofactor.

It catalyses the reaction pyrrole-2-carboxylate + H(+) = 1H-pyrrole + CO2. The enzyme catalyses pyrrole-2-carboxylate + H2O = 1H-pyrrole + hydrogencarbonate. Imidazole acts as a reversible inhibitor via the formation of an imidazole-prenyl-FMN adduct. Activity is light sensitive. Its function is as follows. Catalyzes the prenyl-FMN-dependent decarboxylation of pyrrole-2-carboxylate (P2C). Can also catalyze the carboxylation of pyrrole in the presence of elevated concentrations of CO(2) or bicarbonate. Can accept a modest range of heteroaromatic compounds such as 3-methylpyrrole-2-carboxylate, indole-3-carboxylate and furan-2-carboxylate, and shows very low activity with thiophene-2-carboxylate. Attenuates the virulence of P.aeruginosa in a Drosophila model when overexpressed. The polypeptide is Pyrrole-2-carboxylic acid decarboxylase (Pseudomonas aeruginosa (strain ATCC 15692 / DSM 22644 / CIP 104116 / JCM 14847 / LMG 12228 / 1C / PRS 101 / PAO1)).